The following is a 476-amino-acid chain: Abscisic acid 8'-hydroxylase CYP707A1 (476 aa).

Residues 5 to 25 (FEIFLYISMFVLGYLSYYFCF) form a helical membrane-spanning segment. Heme is bound at residue Cys422.

This sequence belongs to the cytochrome P450 family. The cofactor is heme. Expressed in ovaries (specifically in ovules and placenta), sepals, petals and pedicels.

Its subcellular location is the membrane. The enzyme catalyses 2-cis-(+)-abscisate + reduced [NADPH--hemoprotein reductase] + O2 = (+)-8'-hydroxyabscisate + oxidized [NADPH--hemoprotein reductase] + H2O + H(+). Its pathway is plant hormone degradation; abscisic acid degradation. Functionally, involved in the oxidative degradation of abscisic acid, especially in pollinated ovaries. This Solanum lycopersicum (Tomato) protein is Abscisic acid 8'-hydroxylase CYP707A1.